Reading from the N-terminus, the 543-residue chain is Chaperonin GroEL 2 (543 aa).

Residues 29-32 (TLGP), 86-90 (DGTTT), glycine 413, 477-479 (DAA), and aspartate 493 each bind ATP. The segment at 523–543 (PQEPEPAAGGHGHGHQHGPGF) is disordered. The span at 534–543 (GHGHQHGPGF) shows a compositional bias: basic residues.

This sequence belongs to the chaperonin (HSP60) family. In terms of assembly, forms a cylinder of 14 subunits composed of two heptameric rings stacked back-to-back. Interacts with the co-chaperonin GroES.

It localises to the cytoplasm. It carries out the reaction ATP + H2O + a folded polypeptide = ADP + phosphate + an unfolded polypeptide.. Functionally, together with its co-chaperonin GroES, plays an essential role in assisting protein folding. The GroEL-GroES system forms a nano-cage that allows encapsulation of the non-native substrate proteins and provides a physical environment optimized to promote and accelerate protein folding. This is Chaperonin GroEL 2 from Salinispora tropica (strain ATCC BAA-916 / DSM 44818 / JCM 13857 / NBRC 105044 / CNB-440).